We begin with the raw amino-acid sequence, 283 residues long: Shikimate dehydrogenase (NADP(+)) (283 aa).

Residues 16–18 (SLS) and Thr63 each bind shikimate. The Proton acceptor role is filled by Lys67. Asp79 contacts NADP(+). Residues Asn88 and Asp103 each contribute to the shikimate site. NADP(+)-binding positions include 128 to 132 (GAGGA), Ala223, and Gly243.

Belongs to the shikimate dehydrogenase family. In terms of assembly, homodimer.

The catalysed reaction is shikimate + NADP(+) = 3-dehydroshikimate + NADPH + H(+). It functions in the pathway metabolic intermediate biosynthesis; chorismate biosynthesis; chorismate from D-erythrose 4-phosphate and phosphoenolpyruvate: step 4/7. Its function is as follows. Involved in the biosynthesis of the chorismate, which leads to the biosynthesis of aromatic amino acids. Catalyzes the reversible NADPH linked reduction of 3-dehydroshikimate (DHSA) to yield shikimate (SA). This is Shikimate dehydrogenase (NADP(+)) from Xanthomonas oryzae pv. oryzae (strain MAFF 311018).